The primary structure comprises 171 residues: Protein TIFY 11d (171 aa).

A Tify domain is found at 65–100; it reads PSAGTAPLTIFYDGRMVVVDDVPAEKAAELMRLAGS. Residues 117 to 142 carry the Jas motif; that stretch reads PIARKASLQRFLQKRKHRITTTSEPY. A Nuclear localization signal motif is present at residues 119–126; that stretch reads ARKASLQR.

It belongs to the TIFY/JAZ family. Interacts with BHLH148 and COI1A. Interacts with COI1A, COI1B and COI2 in a coronatine-dependent manner. Coronatine is an analog of jasmonoyl isoleucine (JA-Ile). In terms of processing, ubiquitinated. Increase in jasmonoyl isoleucine (JA-Ile) levels mediates its degradation via COI1A-mediated proteasome pathway.

It is found in the nucleus. In terms of biological role, repressor of jasmonate (JA) responses. May act on an initial response of JA-regulated gene expression toward drought tolerance as part of a BHLH148-TIFY11D/JAZ12-COI1A complex. The polypeptide is Protein TIFY 11d (Oryza sativa subsp. indica (Rice)).